The chain runs to 601 residues: Probable HECT-type ubiquitin ligase-interacting protein creD (601 aa).

2 disordered regions span residues 374 to 397 and 454 to 496; these read EVDP…GTLS and VSTD…GMAT. The span at 455–473 shows a compositional bias: low complexity; it reads STDSFGPSSGSNSQSPASP. The segment covering 475–489 has biased composition (basic and acidic residues); sequence LSRRPSDEGYHDHDY.

Belongs to the arrestin family. As to quaternary structure, interacts with hulA.

In terms of biological role, component of the regulatory network controlling carbon source utilization through ubiquitination and deubiquitination involving creA, creB, creC, creD and acrB. May be involved in signaling by recognizing appropriately phosphorylated substrates via its arrestin domains and then recruit a HECT-type ubiquitin ligase such as hulA, leading to ubiquitination of the substrate, providing a link between ubiquitination and phosphorylation in protein regulation and stability. The chain is Probable HECT-type ubiquitin ligase-interacting protein creD (creD) from Aspergillus fumigatus (strain CBS 144.89 / FGSC A1163 / CEA10) (Neosartorya fumigata).